The sequence spans 121 residues: Small ribosomal subunit protein uS13 (121 aa).

The interval 95–121 (LPVRGQNTKNNARTRKGKAVAIAGKKK) is disordered. Residues 106–121 (ARTRKGKAVAIAGKKK) are compositionally biased toward basic residues.

Belongs to the universal ribosomal protein uS13 family. Part of the 30S ribosomal subunit. Forms a loose heterodimer with protein S19. Forms two bridges to the 50S subunit in the 70S ribosome.

Located at the top of the head of the 30S subunit, it contacts several helices of the 16S rRNA. In the 70S ribosome it contacts the 23S rRNA (bridge B1a) and protein L5 of the 50S subunit (bridge B1b), connecting the 2 subunits; these bridges are implicated in subunit movement. Contacts the tRNAs in the A and P-sites. The sequence is that of Small ribosomal subunit protein uS13 from Streptococcus thermophilus (strain CNRZ 1066).